The chain runs to 159 residues: Ribosomal RNA large subunit methyltransferase H (159 aa).

Residues Leu76, Gly108, and 127-132 (FSKMTL) each bind S-adenosyl-L-methionine.

It belongs to the RNA methyltransferase RlmH family. Homodimer.

The protein resides in the cytoplasm. The catalysed reaction is pseudouridine(1915) in 23S rRNA + S-adenosyl-L-methionine = N(3)-methylpseudouridine(1915) in 23S rRNA + S-adenosyl-L-homocysteine + H(+). Functionally, specifically methylates the pseudouridine at position 1915 (m3Psi1915) in 23S rRNA. In Bacillus cereus (strain ATCC 14579 / DSM 31 / CCUG 7414 / JCM 2152 / NBRC 15305 / NCIMB 9373 / NCTC 2599 / NRRL B-3711), this protein is Ribosomal RNA large subunit methyltransferase H.